The sequence spans 288 residues: Small ribosomal subunit protein uS2 (288 aa).

Residues 259–276 (EAAPAAEEAPAAEAEAAA) show a composition bias toward low complexity. The interval 259–288 (EAAPAAEEAPAAEAEAAATDTSSESDKTEA) is disordered.

The protein belongs to the universal ribosomal protein uS2 family.

The sequence is that of Small ribosomal subunit protein uS2 from Maricaulis maris (strain MCS10) (Caulobacter maris).